The following is a 278-amino-acid chain: MACSNWVFTRNFQGALPLLSFDERVQYAVWQHERGTHDHIQGVIQLKKKARFSTVKEIIGGNPHVEKMKGTIEEASAYVQKEETRVAGPWSYGDLLKRGSHRRKTMERYLEDPEEMQLKDPDTALRCNAKRLKEDFMKEKTKLQLRPWQKELHDLILTEPDDRTIIWVYGPDGGEGKSMFAKELIKYGWFYTAGGKTQDILYMYAQDPERNIAFDVPRCSSEMMNYQAMEMMKNRCFASTKYRSVDLCCNKNVHLVVFANVAYDPTKISEDRIVIINC.

The CRESS-DNA virus Rep endonuclease domain occupies 1–95; sequence MACSNWVFTR…VAGPWSYGDL (95 aa). An RCR-1 motif is present at residues 8–11; that stretch reads FTRN. A divalent metal cation-binding residues include Glu33 and His39. Positions 39–41 match the RCR-2 motif; sequence HIQ. The short motif at 48–69 is the Nuclear localization signal element; that stretch reads KKARFSTVKEIIGGNPHVEKMK. The active-site For DNA cleavage activity is the Tyr78. Residues 78-81 carry the RCR-3 motif; sequence YVQK. Glu83 serves as a coordination point for a divalent metal cation. The Nuclear localization signal motif lies at 95-101; sequence LLKRGSH. 176–178 is an ATP binding site; that stretch reads GKS.

The protein belongs to the nanoviridea/circoviridae replication-associated protein family. In terms of assembly, homooligomer (Potential). Rep binds to repeated DNA motifs (iterons). Requires Mg(2+) as cofactor. It depends on Mn(2+) as a cofactor.

The protein resides in the host nucleus. It catalyses the reaction ATP + H2O = ADP + phosphate + H(+). Initiates and terminates the replication only of its own subviral DNA molecule. The closed circular ssDNA genome is first converted to a superhelical dsDNA. Rep binds a specific hairpin at the genome origin of replication. Introduces an endonucleolytic nick within the intergenic region of the genome, thereby initiating the rolling circle replication (RCR). Following cleavage, binds covalently to the 5'-phosphate of DNA as a tyrosyl ester. The cleavage gives rise to a free 3'-OH that serves as a primer for the cellular DNA polymerase. The polymerase synthesizes the (+) strand DNA by rolling circle mechanism. After one round of replication, a Rep-catalyzed nucleotidyl transfer reaction releases a circular single-stranded virus genome, thereby terminating the replication. Displays origin-specific DNA cleavage, nucleotidyl transferase, ATPase and helicase activities. This Faba bean necrotic yellows C1 alphasatellite (FBNYC1A) protein is Para-Rep C1 (C1).